We begin with the raw amino-acid sequence, 235 residues long: tRNA pseudouridine synthase B (235 aa).

The active-site Nucleophile is the aspartate 45.

Belongs to the pseudouridine synthase TruB family. Type 1 subfamily.

The enzyme catalyses uridine(55) in tRNA = pseudouridine(55) in tRNA. Responsible for synthesis of pseudouridine from uracil-55 in the psi GC loop of transfer RNAs. This is tRNA pseudouridine synthase B from Chlamydia abortus (strain DSM 27085 / S26/3) (Chlamydophila abortus).